The sequence spans 311 residues: Coproporphyrin III ferrochelatase 1 (311 aa).

Residues Y12, R29, 45–46 (RY), S53, and Y124 each bind Fe-coproporphyrin III. Residues H182 and E263 each contribute to the Fe(2+) site.

The protein belongs to the ferrochelatase family.

It localises to the cytoplasm. The catalysed reaction is Fe-coproporphyrin III + 2 H(+) = coproporphyrin III + Fe(2+). The protein operates within porphyrin-containing compound metabolism; protoheme biosynthesis. Involved in coproporphyrin-dependent heme b biosynthesis. Catalyzes the insertion of ferrous iron into coproporphyrin III to form Fe-coproporphyrin III. The polypeptide is Coproporphyrin III ferrochelatase 1 (Bacillus cereus (strain ATCC 10987 / NRS 248)).